A 144-amino-acid chain; its full sequence is Large ribosomal subunit protein uL16 (144 aa).

Over residues 1–16 (MLTPKRVKHRKQHRGK) the composition is skewed to basic residues. The interval 1–22 (MLTPKRVKHRKQHRGKMAGNAK) is disordered.

It belongs to the universal ribosomal protein uL16 family. Part of the 50S ribosomal subunit.

Binds 23S rRNA and is also seen to make contacts with the A and possibly P site tRNAs. This chain is Large ribosomal subunit protein uL16, found in Brevibacillus brevis (strain 47 / JCM 6285 / NBRC 100599).